A 468-amino-acid chain; its full sequence is Uronate isomerase (468 aa).

It belongs to the metallo-dependent hydrolases superfamily. Uronate isomerase family.

The enzyme catalyses D-glucuronate = D-fructuronate. It catalyses the reaction aldehydo-D-galacturonate = keto-D-tagaturonate. It functions in the pathway carbohydrate metabolism; pentose and glucuronate interconversion. The polypeptide is Uronate isomerase (Brachyspira hyodysenteriae (strain ATCC 49526 / WA1)).